We begin with the raw amino-acid sequence, 655 residues long: Import motor subunit, mitochondrial (655 aa).

The transit peptide at 1-23 (MLAAKNILNRSSLSSSFRIATRL) directs the protein to the mitochondrion. Threonine 330 carries the phosphothreonine modification. The disordered stretch occupies residues 629 to 655 (EQLYKNDSNNNNNNNNGNNAESDETKQ). The segment covering 637 to 647 (NNNNNNNNGNN) has biased composition (low complexity).

It belongs to the heat shock protein 70 family. Component of the PAM complex, at least composed of SSC1 (mtHsp70), MGE1, TIM44, PAM16/TIM16, PAM17 and PAM18/TIM14. In the complex, SSC1 interacts directly with PAM18 and TIM44. Interacts with NAP1. Component of endonuclease SceI (endo.SceI), which is a heterodimer of ENS2 and SSC1.

It localises to the mitochondrion matrix. It catalyses the reaction ATP + H2O = ADP + phosphate + H(+). In terms of biological role, essential component of the PAM complex, a complex required for the translocation of transit peptide-containing proteins from the inner membrane into the mitochondrial matrix in an ATP-dependent manner. Constitutes the ATP-driven core of the motor and binds the precursor preprotein. Required for the import of the processed frataxin homolog YFH1 into the mitochondrion. Its function is as follows. Acts as a non-catalytic component of endonuclease SceI (endo.SceI), which cleaves specifically at multiple sites on mitochondrial DNA and produces double-stranded breaks. SSC1 confers broader sequence specificity, greater stability, and higher activity on the catalytic subunit. This chain is Import motor subunit, mitochondrial, found in Saccharomyces cerevisiae (Baker's yeast).